The chain runs to 181 residues: Large ribosomal subunit protein uL10 (181 aa).

Belongs to the universal ribosomal protein uL10 family. As to quaternary structure, part of the ribosomal stalk of the 50S ribosomal subunit. The N-terminus interacts with L11 and the large rRNA to form the base of the stalk. The C-terminus forms an elongated spine to which L12 dimers bind in a sequential fashion forming a multimeric L10(L12)X complex.

In terms of biological role, forms part of the ribosomal stalk, playing a central role in the interaction of the ribosome with GTP-bound translation factors. This chain is Large ribosomal subunit protein uL10, found in Fervidobacterium nodosum (strain ATCC 35602 / DSM 5306 / Rt17-B1).